The primary structure comprises 547 residues: Cellodextrinase (547 aa).

The active-site Nucleophile is Asp-148. Residues His-474, Asp-520, and Glu-529 contribute to the active site.

This sequence belongs to the glycosyl hydrolase 9 (cellulase E) family.

It localises to the secreted. It carries out the reaction Endohydrolysis of (1-&gt;4)-beta-D-glucosidic linkages in cellulose, lichenin and cereal beta-D-glucans.. Is not inhibited by methylcellulose. Functionally, glycoside hydrolase that rapidly hydrolyzes short-chain cellodextrins to yield either cellobiose or cellobiose and glucose as end products; cellobiose is not hydrolyzed further. Also shows limited activity against endoglucanase specific substrates (carboxymethylcellulose (CMC), lichenan, laminarin and xylan). The protein is Cellodextrinase of Butyrivibrio fibrisolvens.